The chain runs to 1112 residues: cGMP-inhibited 3',5'-cyclic phosphodiesterase 3B (1112 aa).

The span at 1 to 10 shows a compositional bias: basic and acidic residues; the sequence is MRRDERDAKA. The segment at 1-25 is interaction with RAPGEF3; it reads MRRDERDAKAMRSLQPPDGAGSPPE. The disordered stretch occupies residues 1 to 26; the sequence is MRRDERDAKAMRSLQPPDGAGSPPES. Position 13 is a phosphoserine (S13). 6 helical membrane passes run 88-108, 117-137, 152-172, 192-212, 220-240, and 247-267; these read FVLA…AAWL, HSLS…CFLT, WWLL…WQWW, AAAG…TLAH, VLVL…LGSL, and LLSG…DHFF. Residue S295 is modified to Phosphoserine; by PKB/AKT1 or PKB/AKT2. S296 and S442 each carry phosphoserine. The interval 418-471 is disordered; that stretch reads EKGDRKLNKGLNRNSLPTPQLRRSSGTSGLLPVEQSSRWDRNNGKRPHQEFGIS. Residues 428 to 445 show a composition bias toward polar residues; that stretch reads LNRNSLPTPQLRRSSGTS. Residues 436–460 form an interaction with PIK3R6 region; the sequence is PQLRRSSGTSGLLPVEQSSRWDRNN. Over residues 454 to 466 the composition is skewed to basic and acidic residues; that stretch reads SRWDRNNGKRPHQ. Positions 651–1079 constitute a PDEase domain; it reads TNIEQEVSLD…KIWKEIVEEE (429 aa). The active-site Proton donor is the H737. Residue H737 coordinates AMP. Residues H741, H821, D822, and D937 each contribute to the Mg(2+) site. Residues D822, D937, and Q988 each coordinate AMP. Composition is skewed to acidic residues over residues 1017-1041 and 1103-1112; these read EEDN…EEME and QVIEEADEEE. Disordered regions lie at residues 1017–1051 and 1092–1112; these read EEDN…PPRR and ENSS…DEEE.

It belongs to the cyclic nucleotide phosphodiesterase family. PDE3 subfamily. As to quaternary structure, homodimer. Interacts with PIK3CG; regulates PDE3B activity and thereby cAMP levels in cells. Interacts with RAPGEF3 and PIK3R6; form a signaling complex that regulates phosphatidylinositol 3-kinase gamma in angiogenesis. Interacts with ABHD15; this interaction regulates PDE3B's stability and expression and, thereby, impacts the antilipolytic action of insulin. Mg(2+) is required as a cofactor. Mn(2+) serves as cofactor. In terms of processing, phosphorylation at Ser-295 mediates insulin-induced activation of PDE3B. In terms of tissue distribution, abundant in adipose tissues.

Its subcellular location is the membrane. The catalysed reaction is a nucleoside 3',5'-cyclic phosphate + H2O = a nucleoside 5'-phosphate + H(+). It carries out the reaction 3',5'-cyclic AMP + H2O = AMP + H(+). The enzyme catalyses 3',5'-cyclic GMP + H2O = GMP + H(+). Inhibited by cGMP. In terms of biological role, cyclic nucleotide phosphodiesterase with a dual-specificity for the second messengers cAMP and cGMP, which are key regulators of many important physiological process. Regulates angiogenesis by inhibiting the cAMP-dependent guanine nucleotide exchange factor RAPGEF3 and downstream phosphatidylinositol 3-kinase gamma-mediated signaling. Controls cardiac contractility by reducing cAMP concentration in cardiocytes. The sequence is that of cGMP-inhibited 3',5'-cyclic phosphodiesterase 3B from Homo sapiens (Human).